A 371-amino-acid polypeptide reads, in one-letter code: 4-hydroxyprotoasukamycin monooxygenase (371 aa).

The protein belongs to the bacterial luciferase oxidoreductase family. The cofactor is FMN.

It catalyses the reaction 4-hydroxyprotoasukamycin + NADH + O2 + H(+) = asukamycin + NAD(+) + H2O. It participates in antibiotic biosynthesis. Its function is as follows. Involved in the biosynthesis of the antibiotic asukamycin. Catalyzes the epoxidation of 4-hydroxyprotoasukamycin to the final product, asukamycin. Can also convert some 4-hydroxyprotoasukamycin derivatives to their asukamycin derivatives, but cannot use protoasukamycin as substrate. Can also use NADPH, but catalytic efficiency is 20-fold higher with NADH. In Streptomyces nodosus subsp. asukaensis, this protein is 4-hydroxyprotoasukamycin monooxygenase.